Here is a 251-residue protein sequence, read N- to C-terminus: Proteasome subunit alpha type-4-like (251 aa).

This sequence belongs to the peptidase T1A family. The 26S proteasome consists of a 20S proteasome core and two 19S regulatory subunits. The 20S proteasome core is composed of 28 subunits that are arranged in four stacked rings, resulting in a barrel-shaped structure. The two end rings are each formed by seven alpha subunits, and the two central rings are each formed by seven beta subunits. The catalytic chamber with the active sites is on the inside of the barrel. In terms of tissue distribution, testis, prominent after meiosis II. After meiosis, predominantly localized to the haploid spermatid nuclei of the 64-cell cysts, remaining during the elongation and condensation of the spermatid nuclei. In mature, motile sperm, expression is seen exclusively in the sperm head.

The protein resides in the nucleus. In terms of biological role, the proteasome is a multicatalytic proteinase complex which is characterized by its ability to cleave peptides with Arg, Phe, Tyr, Leu, and Glu adjacent to the leaving group at neutral or slightly basic pH. The proteasome has an ATP-dependent proteolytic activity. The protein is Proteasome subunit alpha type-4-like (Prosalpha3T) of Drosophila melanogaster (Fruit fly).